A 340-amino-acid polypeptide reads, in one-letter code: Ferrochelatase (340 aa).

Residues His189 and Glu292 each coordinate Fe cation.

The protein belongs to the ferrochelatase family.

The protein resides in the cytoplasm. It catalyses the reaction heme b + 2 H(+) = protoporphyrin IX + Fe(2+). It functions in the pathway porphyrin-containing compound metabolism; protoheme biosynthesis; protoheme from protoporphyrin-IX: step 1/1. Catalyzes the ferrous insertion into protoporphyrin IX. The chain is Ferrochelatase from Pseudomonas aeruginosa (strain UCBPP-PA14).